A 309-amino-acid chain; its full sequence is Solute carrier family 25 member 48 (309 aa).

Solcar repeat units lie at residues 3 to 86 (VFQL…TQRL), 99 to 209 (CSML…FCNW), and 218 to 305 (PPPC…SLQF). The next 6 helical transmembrane spans lie at 9–29 (FLAG…LDTV), 61–81 (GLSF…GFFS), 105–125 (TVAS…VDLV), 186–206 (GAMI…YTLF), 218–238 (PPPC…WVTA), and 281–299 (ATVN…FLGY).

It belongs to the mitochondrial carrier (TC 2.A.29) family.

Its subcellular location is the mitochondrion inner membrane. The chain is Solute carrier family 25 member 48 (slc25a48) from Danio rerio (Zebrafish).